The following is a 60-amino-acid chain: Large ribosomal subunit protein bL32 (60 aa).

The disordered stretch occupies residues 1–60 (MAVQQNKKSPSKRGMHRSHNALTVPGIAVEPTTGETHMRHHISPNGFYRGRQVLKNKSEA). Positions 9 to 19 (SPSKRGMHRSH) are enriched in basic residues.

The protein belongs to the bacterial ribosomal protein bL32 family.

The chain is Large ribosomal subunit protein bL32 from Acidovorax ebreus (strain TPSY) (Diaphorobacter sp. (strain TPSY)).